We begin with the raw amino-acid sequence, 434 residues long: Nuclear receptor subfamily 1 group I member 2 (434 aa).

Residues 38-107 (PQICRVCGDK…RLRKCLESGM (70 aa)) constitute a DNA-binding region (nuclear receptor). NR C4-type zinc fingers lie at residues 41–61 (CRVC…CEGC) and 77–102 (CPFR…LRKC). Positions 66 to 92 (RRAMKRNARLRCPFRKGACEITRKTRR) match the Bipartite nuclear localization signal motif. The hinge stretch occupies residues 108 to 145 (KKEMIMSDAAVEERRALIKRKKRERIGTQPPGVQGLTE). The region spanning 146 to 433 (EQRMMIRELM…LMQELFGITG (288 aa)) is the NR LBD domain. Hyperforin contacts are provided by residues Ser-247, 285–288 (QLRF), and His-407.

It belongs to the nuclear hormone receptor family. NR1 subfamily. Heterodimer with RXRA. Interacts with NCOA1. Interacts (via domain NR LBD) with CRY1 and CRY2 in a ligand-dependent manner.

It localises to the nucleus. Functionally, nuclear receptor that binds and is activated by a variety of endogenous and xenobiotic compounds. Transcription factor that activates the transcription of multiple genes involved in the metabolism and secretion of potentially harmful xenobiotics, endogenous compounds and drugs. Response to specific ligands is species-specific, due to differences in the ligand-binding domain. Activated by naturally occurring steroids, such as pregnenolone and progesterone. Binds to a response element in the promoters of the CYP3A4 and ABCB1/MDR1 genes. The protein is Nuclear receptor subfamily 1 group I member 2 (NR1I2) of Macaca mulatta (Rhesus macaque).